We begin with the raw amino-acid sequence, 207 residues long: Redox-sensing transcriptional repressor Rex (207 aa).

The segment at residues 15–54 (LYYRCLNRLYEEGIEYVASKDIAERLGIKSSQVRKDLSYF) is a DNA-binding region (H-T-H motif). Residue 89 to 94 (GAGNIG) participates in NAD(+) binding.

It belongs to the transcriptional regulatory Rex family. In terms of assembly, homodimer.

The protein localises to the cytoplasm. In terms of biological role, modulates transcription in response to changes in cellular NADH/NAD(+) redox state. This is Redox-sensing transcriptional repressor Rex from Thermosipho africanus (strain TCF52B).